A 20-amino-acid chain; its full sequence is Magnificalysin I (20 aa).

Positions 1–10 (ALAGTIIAGA) are plays an important role in the hemolytic activity. The tract at residues 9 to 20 (GASLTFKILDEV) is N-terminal region.

It belongs to the actinoporin family. Sea anemone subfamily. In terms of assembly, octamer or nonamer in membranes. Monomer in the soluble state.

The protein localises to the secreted. It localises to the nematocyst. It is found in the target cell membrane. Its function is as follows. Pore-forming protein that forms cations-selective hydrophilic pores of around 1 nm and causes cytolysis. Pore formation is a multi-step process that involves specific recognition of membrane sphingomyelin (but neither cholesterol nor phosphatidylcholine) using aromatic rich region and adjacent phosphocholine (POC) binding site, firm binding to the membrane (mainly driven by hydrophobic interactions) accompanied by the transfer of the N-terminal region to the lipid-water interface and finally pore formation after oligomerization of monomers. The sequence is that of Magnificalysin I from Heteractis magnifica (Magnificent sea anemone).